Consider the following 588-residue polypeptide: MAFVSNGTERDADEEGFEDAYENIPVASKMDLRCALEECTLALNLFLNNKFSEALEILRPWAKESIYHALGYSTILVMQSAMTFEPQDVQMGISTMKEALQTCQRFRKRTTVVESLSNLVSKQSGDQLTEEEMHAEICYAECLLQKATLTFVQDENMINFIKGGMKIRTSYQIYKECHQLYSLAVTQGKTCSDTHHQFEGGVKLGIGAFNLMLSLLPSRVLRLLEFIGFSGNREFGLSQLREGASGNSIRAILCVLTLLFYHTYISTILGTGEANLEEAEALLEPYLKKFPNGSIILFYAARIDILKGRFEQAQETFQKCIVSQQEWKQIHHLCYWELMWCHSFQQDWLQAYRYADLLCKESKWSKATYVFQKAAILSMLPDDVVKTTGEDIVALFRQVEGLKQRIAGKSIPTEKFAVRKSRRYASDNPVKLTLPALEMVYVWNGFTIVGKRPDLTENVLVTIEKAEVALQSEKNPSEYHPDDLCLVQLLKGVCLKHLGRLLQAELCFNQVIQSEKRVKYDHYLLPFTFYELGLLYKDQGDRDKAIRYIETAKSNYKDYSLESRLHFRIHAALSSLKGSPVSTPSTPQ.

3 TPR repeats span residues 294–327, 485–518, and 526–559; these read SIIL…QQEW, CLVQ…EKRV, and PFTF…YKDY.

It belongs to the TTC39 family.

Its function is as follows. May be involved in lipid metabolism. This is Tetratricopeptide repeat protein 39B (ttc39b) from Xenopus tropicalis (Western clawed frog).